The primary structure comprises 389 residues: Alanine racemase (389 aa).

Residue K48 is the Proton acceptor; specific for D-alanine of the active site. Position 48 is an N6-(pyridoxal phosphate)lysine (K48). R144 is a binding site for substrate. Y281 serves as the catalytic Proton acceptor; specific for L-alanine. M329 is a binding site for substrate.

Belongs to the alanine racemase family. Requires pyridoxal 5'-phosphate as cofactor.

The enzyme catalyses L-alanine = D-alanine. Its pathway is amino-acid biosynthesis; D-alanine biosynthesis; D-alanine from L-alanine: step 1/1. Functionally, catalyzes the interconversion of L-alanine and D-alanine. May also act on other amino acids. The protein is Alanine racemase (alr) of Leptospira interrogans serogroup Icterohaemorrhagiae serovar Lai (strain 56601).